We begin with the raw amino-acid sequence, 355 residues long: MNLQYSPVFKCPPEMVTHCQWIYWFTHFELLAMIIEIPSFLLVIYATIKSPFHYNLNFIGLFMLLGYYVFLVGRFITCLYEIGSLTVKDEDAENEIYPMPLILSSILQFFYMGCACGISLAVAFERFFATYFVETYEKKKRKWISLFLCSEFTVACGVSAIVMLYDLLPFAVMAFLGVFISCASFLFYLVLFYMNKRRLHTIQQDRDNDVYTLSVRFQLSENLKVMTLLRNVVLFSGVNNFVMAIILTMYMSKSFKVSYPLATLYLHFAFNCCVLLYSFLMLIIIIFSVKQYRMYYFSIRFVRVVLYPLVGRCFQNEFSQSPVQQLTIRDETESYFVNLSSQWDEKFQKINRLSI.

7 helical membrane passes run 28–48, 56–76, 102–122, 144–164, 172–192, 232–252, and 268–288; these read FELL…YATI, LNFI…GRFI, ILSS…SLAV, ISLF…IVML, VMAF…LVLF, VVLF…MYMS, and FAFN…IIFS.

The protein belongs to the nematode receptor-like protein sre family.

Its subcellular location is the membrane. In Caenorhabditis elegans, this protein is Serpentine receptor class epsilon-1 (sre-1).